The following is a 392-amino-acid chain: Riboflavin biosynthesis protein PYRD, chloroplastic (392 aa).

The N-terminal 26 residues, 1 to 26, are a transit peptide targeting the chloroplast; that stretch reads MASSLVSRPHLTQRPVRAATLASATR. Positions 46-168 constitute a CMP/dCMP-type deaminase domain; it reads LDDAHYMRRC…KLQGAGISVR (123 aa). His-95 contributes to the Zn(2+) binding site. Glu-97 (proton donor) is an active-site residue. Zn(2+) is bound by residues Cys-120 and Cys-129.

Requires Zn(2+) as cofactor.

It localises to the plastid. It is found in the chloroplast. It catalyses the reaction 2,5-diamino-6-hydroxy-4-(5-phosphoribosylamino)-pyrimidine + H2O + H(+) = 5-amino-6-(5-phospho-D-ribosylamino)uracil + NH4(+). It functions in the pathway cofactor biosynthesis; riboflavin biosynthesis; 5-amino-6-(D-ribitylamino)uracil from GTP: step 2/4. Monofunctional pyrimidine deaminase involved in the riboflavin biosynthesis pathway. Also has a reductase domain that lacks catalytically essential substrate-binding residues. The polypeptide is Riboflavin biosynthesis protein PYRD, chloroplastic (PYRD) (Zea mays (Maize)).